The chain runs to 493 residues: Cobyric acid synthase (493 aa).

One can recognise a GATase cobBQ-type domain in the interval 260–427 (RLSVAAIRLP…RHGYLQDDPA (168 aa)). The active site involves H419.

It belongs to the CobB/CobQ family. CobQ subfamily.

It functions in the pathway cofactor biosynthesis; adenosylcobalamin biosynthesis. Functionally, catalyzes amidations at positions B, D, E, and G on adenosylcobyrinic A,C-diamide. NH(2) groups are provided by glutamine, and one molecule of ATP is hydrogenolyzed for each amidation. This Corynebacterium efficiens (strain DSM 44549 / YS-314 / AJ 12310 / JCM 11189 / NBRC 100395) protein is Cobyric acid synthase.